Consider the following 317-residue polypeptide: Serpentine receptor class delta-44 (317 aa).

The next 6 helical transmembrane spans lie at 5 to 25 (ILSV…IILI), 90 to 110 (MFHI…LTTF), 130 to 150 (ILFI…LVII), 185 to 205 (RVNG…CLLL), 235 to 255 (IFGH…SLIT), and 264 to 284 (FFIF…TMYF).

The protein belongs to the nematode receptor-like protein srd family.

Its subcellular location is the membrane. This Caenorhabditis elegans protein is Serpentine receptor class delta-44 (srd-44).